The primary structure comprises 753 residues: Oligopeptide transporter 5 (753 aa).

The next 15 helical transmembrane spans lie at 56-76 (TWFL…FFGY), 80-100 (PLTV…KLMA), 132-152 (ITIF…LTIV), 163-183 (AAAM…AGMF), 224-244 (FFLI…YLFP), 296-316 (FFAI…ILPI), 368-388 (YLSI…TATI), 432-452 (WWFV…CEGF), 461-481 (WGLL…GVIL), 506-528 (PLAN…YFVG), 544-564 (FIVQ…TTWW), 583-603 (PWTC…GIIG), 615-635 (PGMN…WFFA), 662-682 (AKAV…YYIF), and 695-715 (ILSA…YFAL).

Belongs to the oligopeptide OPT transporter (TC 2.A.67.1) family. As to expression, expressed predominantly in flowers, and at a very low level in leaves and roots.

It is found in the membrane. Its function is as follows. Involved in the translocation of tetra- and pentapeptides across the cellular membrane in an energy-dependent manner. The polypeptide is Oligopeptide transporter 5 (OPT5) (Arabidopsis thaliana (Mouse-ear cress)).